A 156-amino-acid chain; its full sequence is MPRRKMVNQRAILPDPKWNSEILSKFINILMVNGKKSISEKIIYTALNNLKKKLNKDHLTIFDLALEKVRPIVEVKSRRVGGSTYQVPIEVRSSRRNALAMRWIIEAARKRKDKSMSLRLAKEIEDALENKGTAVKKREEVHRMAEANKAFAHYRW.

The protein belongs to the universal ribosomal protein uS7 family. Part of the 30S ribosomal subunit. Contacts proteins S9 and S11.

Functionally, one of the primary rRNA binding proteins, it binds directly to 16S rRNA where it nucleates assembly of the head domain of the 30S subunit. Is located at the subunit interface close to the decoding center, probably blocks exit of the E-site tRNA. This is Small ribosomal subunit protein uS7 from Wigglesworthia glossinidia brevipalpis.